The sequence spans 1483 residues: Mediator of RNA polymerase II transcription subunit 26 (1483 aa).

One can recognise a TFIIS N-terminal domain in the interval 8-85 (ELTTHLSQAL…KKWREMVGIQ (78 aa)). Residues S204, S258, and S421 each carry the phosphoserine modification. Disordered regions lie at residues 227 to 278 (SDSD…GQVA), 414 to 438 (HEYL…SKGV), 480 to 518 (VSMQ…SMNS), 541 to 575 (TDSD…SIQS), and 989 to 1041 (DKSS…MKRR). The segment covering 426–435 (PKRRGRKKGS) has biased composition (basic residues). Positions 480 to 495 (VSMQSSASNLSNSSTN) are enriched in low complexity. The span at 496–518 (RDLPSHTTFPRQTSSCSDTSMNS) shows a compositional bias: polar residues. T541 carries the phosphothreonine modification. Positions 550–564 (PSHDSNKSQEIKECT) are enriched in basic and acidic residues. S551 bears the Phosphoserine mark. Polar residues-rich tracts occupy residues 565-575 (SLDSNSNSIQS) and 989-999 (DKSSNTGCQGN). Positions 1000 to 1011 (SPYSSSSSSSYS) are enriched in low complexity. Residues 1020–1033 (ITKNLQNKNIQLNS) show a composition bias toward polar residues. S1177 carries the post-translational modification Phosphoserine. T1179 carries the post-translational modification Phosphothreonine.

Belongs to the Mediator complex subunit 26 family. Component of the Mediator complex. Interacts with MED6 and MED17.

The protein localises to the nucleus. Component of the Mediator complex, a coactivator involved in the regulated transcription of nearly all RNA polymerase II-dependent genes. Mediator functions as a bridge to convey information from gene-specific regulatory proteins to the basal RNA polymerase II transcription machinery. Mediator is recruited to promoters by direct interactions with regulatory proteins and serves as a scaffold for the assembly of a functional preinitiation complex with RNA polymerase II and the general transcription factors. Required for activated transcription of the MtnA gene. This chain is Mediator of RNA polymerase II transcription subunit 26 (MED26), found in Drosophila melanogaster (Fruit fly).